We begin with the raw amino-acid sequence, 744 residues long: Kinesin-like protein KIF2A (744 aa).

A disordered region spans residues 66–186; it reads LVPDEEIEPS…QQELREKRAQ (121 aa). Position 75 is a phosphoserine (Ser75). A phosphothreonine mark is found at Thr78 and Thr97. Ser100 bears the Phosphoserine mark. Lys102 bears the N6-acetyllysine mark. Residues 123–140 show a composition bias toward polar residues; the sequence is FPEQSSSAQQNGSVSDIS. Ser135 and Ser140 each carry phosphoserine. Positions 154–187 form a coiled coil; sequence RRKSNCVKEVEKLQEKREKRRLQQQELREKRAQD. Residues 159-186 are compositionally biased toward basic and acidic residues; it reads CVKEVEKLQEKREKRRLQQQELREKRAQ. One can recognise a Kinesin motor domain in the interval 223 to 553; that stretch reads RICVCVRKRP…LRYANRVKEF (331 aa). An ATP-binding site is contributed by 313–320; the sequence is GQTGSGKT. A coiled-coil region spans residues 698-737; that stretch reads ATQLEAILEQKIDILTELRDKVKSFRAALQEEEQASKQIN.

This sequence belongs to the TRAFAC class myosin-kinesin ATPase superfamily. Kinesin family. MCAK/KIF2 subfamily. In terms of assembly, interacts with AURKA and PLK1. Interacts with PSRC1. Interacts with MCRS1; the interaction enhances recruitment of KIF2A to the minus ends of spindle microtubules which promotes chromosome alignment.

It localises to the cytoplasm. The protein resides in the cytoskeleton. It is found in the microtubule organizing center. The protein localises to the centrosome. Its subcellular location is the spindle pole. It localises to the spindle. In terms of biological role, plus end-directed microtubule-dependent motor required for normal brain development. May regulate microtubule dynamics during axonal growth. Required for normal progression through mitosis. Required for normal congress of chromosomes at the metaphase plate. Required for normal spindle dynamics during mitosis. Promotes spindle turnover. Implicated in formation of bipolar mitotic spindles. Has microtubule depolymerization activity. The chain is Kinesin-like protein KIF2A from Pongo abelii (Sumatran orangutan).